A 195-amino-acid polypeptide reads, in one-letter code: Imidazoleglycerol-phosphate dehydratase (195 aa).

It belongs to the imidazoleglycerol-phosphate dehydratase family.

It localises to the cytoplasm. The enzyme catalyses D-erythro-1-(imidazol-4-yl)glycerol 3-phosphate = 3-(imidazol-4-yl)-2-oxopropyl phosphate + H2O. The protein operates within amino-acid biosynthesis; L-histidine biosynthesis; L-histidine from 5-phospho-alpha-D-ribose 1-diphosphate: step 6/9. In Aromatoleum aromaticum (strain DSM 19018 / LMG 30748 / EbN1) (Azoarcus sp. (strain EbN1)), this protein is Imidazoleglycerol-phosphate dehydratase.